The primary structure comprises 792 residues: Alpha-1,6-mannosylglycoprotein 6-beta-N-acetylglucosaminyltransferase B (792 aa).

The Cytoplasmic portion of the chain corresponds to 1–24 (MITVNPDGKIMVRRCLVTLRPFRL). Residues 25-45 (FVLGIGFFTLCFLMTSLGGQF) traverse the membrane as a helical; Signal-anchor for type II membrane protein segment. At 46–792 (SARRLGDSPF…GQVALCQGCL (747 aa)) the chain is on the lumenal side. N-linked (GlcNAc...) asparagine glycosylation occurs at asparagine 127. Disulfide bonds link cysteine 157-cysteine 195, cysteine 168-cysteine 208, cysteine 184-cysteine 353, and cysteine 387-cysteine 644. Residue asparagine 675 is glycosylated (N-linked (GlcNAc...) asparagine). 5 disulfide bridges follow: cysteine 700/cysteine 775, cysteine 704/cysteine 777, cysteine 711/cysteine 764, cysteine 732/cysteine 753, and cysteine 788/cysteine 791.

Belongs to the glycosyltransferase 18 family. The cofactor is Mn(2+). Present in brain (at protein level). Predominantly expressed in hippocampus, superficial layers of the brain cortex, striatum, nucleus accumbens, a subset of nuclei in the thalamus, inferior colliculus, brain stem and cerebellum.

It is found in the golgi apparatus membrane. It carries out the reaction N(4)-{beta-D-GlcNAc-(1-&gt;2)-[beta-D-GlcNAc-(1-&gt;4)]-alpha-D-Man-(1-&gt;3)-[beta-D-GlcNAc-(1-&gt;2)-alpha-D-Man-(1-&gt;6)]-beta-D-Man-(1-&gt;4)-beta-D-GlcNAc-(1-&gt;4)-beta-D-GlcNAc}-L-asparaginyl-[protein] + UDP-N-acetyl-alpha-D-glucosamine = N(4)-{beta-D-GlcNAc-(1-&gt;2)-[beta-D-GlcNAc-(1-&gt;4)]-alpha-D-Man-(1-&gt;3)-[beta-D-GlcNAc-(1-&gt;2)-[beta-D-GlcNAc-(1-&gt;6)]-alpha-D-Man-(1-&gt;6)]-beta-D-Man-(1-&gt;4)-beta-D-GlcNAc-(1-&gt;4)-beta-D-GlcNAc}-L-asparaginyl-[protein] + UDP + H(+). The enzyme catalyses 3-O-[N-acetyl-beta-D-glucosaminyl-(1-&gt;2)-alpha-D-mannosyl]-L-seryl-[protein] + UDP-N-acetyl-alpha-D-glucosamine = O(3)-{N-acetyl-beta-D-glucosaminyl-(1-&gt;2)-[N-acetyl-beta-D-glucosaminyl-(1-&gt;6)]-alpha-D-mannosyl}-L-seryl-[protein] + UDP + H(+). It catalyses the reaction 3-O-[N-acetyl-beta-D-glucosaminyl-(1-&gt;2)-alpha-D-mannosyl]-L-threonyl-[protein] + UDP-N-acetyl-alpha-D-glucosamine = O(3)-{N-acetyl-beta-D-glucosaminyl-(1-&gt;2)-[N-acetyl-beta-D-glucosaminyl-(1-&gt;6)]-alpha-D-mannosyl}-L-threonyl-[protein] + UDP + H(+). It functions in the pathway protein modification; protein glycosylation. Its function is as follows. Glycosyltransferase that acts on alpha-linked mannose of N-glycans and O-mannosyl glycans. Catalyzes the transfer of N-acetylglucosamine (GlcNAc) to the beta 1-6 linkage of the mannose residue of GlcNAc-beta1,2-Man-alpha on both the alpha1,3- and alpha1,6-linked mannose arms in the core structure of N-glycan. Also acts on the GlcNAc-beta1,2-Man-alpha1-Ser/Thr moiety, forming a 2,6-branched structure in brain O-mannosyl glycan. Plays an active role in modulating integrin and laminin-dependent adhesion and migration of neuronal cells via its activity in the O-mannosyl glycan pathway. The sequence is that of Alpha-1,6-mannosylglycoprotein 6-beta-N-acetylglucosaminyltransferase B (Mgat5b) from Mus musculus (Mouse).